Reading from the N-terminus, the 277-residue chain is Large ribosomal subunit protein uL2c (277 aa).

The segment at 30–60 (RKKLTSGQHSGKGRNNRGIITSRHRGGGHKR) is disordered. The segment covering 51–60 (SRHRGGGHKR) has biased composition (basic residues).

Belongs to the universal ribosomal protein uL2 family. Part of the 50S ribosomal subunit.

The protein resides in the plastid. It localises to the chloroplast. The protein is Large ribosomal subunit protein uL2c (rpl2) of Angiopteris evecta (Mule's foot fern).